Consider the following 389-residue polypeptide: GDSL esterase/lipase At5g14450 (389 aa).

A signal peptide spans 1 to 30 (MKDNLERAKLMVSSTVFSWLLLCLFAVTTS). Ser48 functions as the Nucleophile in the catalytic mechanism. Residues Asn125 and Asn335 are each glycosylated (N-linked (GlcNAc...) asparagine). Catalysis depends on residues Asp354 and His357.

The protein belongs to the 'GDSL' lipolytic enzyme family.

The protein resides in the secreted. In Arabidopsis thaliana (Mouse-ear cress), this protein is GDSL esterase/lipase At5g14450.